The primary structure comprises 213 residues: Flagellin A1 (213 aa).

Residues 1–10 constitute a propeptide that is removed on maturation; sequence MFENINEDRG. N-linked (GlcNAc...) asparagine glycans are attached at residues asparagine 70, asparagine 115, and asparagine 172.

It belongs to the archaeal flagellin family. Glycosylated by a pentasaccharide similar to the S-layer glycoprotein, probably comprising a hexose, 2 hexuronic acids, a methyl ester of a hexuronic acid and mannose. Glycosylation is required for biosynthesis of stable flagella.

Its subcellular location is the archaeal flagellum. Major flagellin required for motility. Not involved in PibD-dependent surface adhesion. Much more abundant in cells compared to FlgA2. This Haloferax volcanii (strain ATCC 29605 / DSM 3757 / JCM 8879 / NBRC 14742 / NCIMB 2012 / VKM B-1768 / DS2) (Halobacterium volcanii) protein is Flagellin A1 (flgA1).